A 425-amino-acid polypeptide reads, in one-letter code: Adenylosuccinate synthetase (425 aa).

GTP-binding positions include 12 to 18 (GDEGKAK) and 40 to 42 (GHT). Residue aspartate 13 is the Proton acceptor of the active site. Mg(2+)-binding residues include aspartate 13 and glycine 40. Residues 13 to 16 (DEGK), 38 to 41 (NAGH), threonine 130, arginine 144, glutamine 224, threonine 239, and arginine 303 each bind IMP. Catalysis depends on histidine 41, which acts as the Proton donor. 299-305 (ATTGRPR) serves as a coordination point for substrate. GTP-binding positions include arginine 305, 331–333 (KID), and 411–413 (STG).

Belongs to the adenylosuccinate synthetase family. Homodimer. The cofactor is Mg(2+).

The protein resides in the cytoplasm. The catalysed reaction is IMP + L-aspartate + GTP = N(6)-(1,2-dicarboxyethyl)-AMP + GDP + phosphate + 2 H(+). It functions in the pathway purine metabolism; AMP biosynthesis via de novo pathway; AMP from IMP: step 1/2. In terms of biological role, plays an important role in the de novo pathway of purine nucleotide biosynthesis. Catalyzes the first committed step in the biosynthesis of AMP from IMP. The polypeptide is Adenylosuccinate synthetase (Leptospira interrogans serogroup Icterohaemorrhagiae serovar copenhageni (strain Fiocruz L1-130)).